Here is a 277-residue protein sequence, read N- to C-terminus: Phycobilisome rod-core linker polypeptide CpcG1 (277 aa).

Positions 11–189 constitute a PBS-linker domain; that stretch reads RTLDQRVVSY…YWRNKEISLS (179 aa).

Belongs to the phycobilisome linker protein family. As to quaternary structure, the phycobilisome is a hemidiscoidal structure that is composed of two distinct substructures: a core complex and a number of rods radiating from the core.

The protein localises to the cellular thylakoid membrane. Rod-core linker protein required for attachment of phycocyanin to allophycocyanin in cores of phycobilisomes. Its function is as follows. Linker polypeptides determine the state of aggregation and the location of the disk-shaped phycobiliprotein units within the phycobilisome and modulate their spectroscopic properties in order to mediate a directed and optimal energy transfer. This chain is Phycobilisome rod-core linker polypeptide CpcG1 (cpcG1), found in Thermosynechococcus vestitus (strain NIES-2133 / IAM M-273 / BP-1).